Reading from the N-terminus, the 158-residue chain is uncharacterized protein (158 aa).

The signal sequence occupies residues 1–30 (MNKKFLKCGTLFLISCSILGSTIPAVTVFS).

This is an uncharacterized protein from Streptococcus pneumoniae serotype 2 (strain D39 / NCTC 7466).